The chain runs to 319 residues: Major intracellular serine protease (319 aa).

A propeptide spanning residues 1–17 (MNGEIRLIPYVTNEQIM) is cleaved from the precursor. A Peptidase S8 domain is found at 23 to 307 (PEGIKVIKAP…FLYLTAPDEL (285 aa)). Residues aspartate 50, histidine 87, and serine 246 each act as charge relay system in the active site.

Belongs to the peptidase S8 family. In terms of assembly, homodimer.

The protein resides in the cytoplasm. Major intracellular protease produced by Bacillus subtilis. The sequence is that of Major intracellular serine protease (isp) from Bacillus subtilis (strain 168).